The primary structure comprises 95 residues: Small ribosomal subunit protein uS19 (95 aa).

Residues 76-95 are disordered; the sequence is PTRRFGGHADKKAKKGELKK. Residues 82–95 show a composition bias toward basic and acidic residues; that stretch reads GHADKKAKKGELKK.

The protein belongs to the universal ribosomal protein uS19 family.

Its function is as follows. Protein S19 forms a complex with S13 that binds strongly to the 16S ribosomal RNA. This is Small ribosomal subunit protein uS19 (rpsS) from Thermotoga maritima (strain ATCC 43589 / DSM 3109 / JCM 10099 / NBRC 100826 / MSB8).